The sequence spans 144 residues: 3-hydroxyacyl-[acyl-carrier-protein] dehydratase FabZ (144 aa).

His-51 is an active-site residue.

It belongs to the thioester dehydratase family. FabZ subfamily.

The protein localises to the cytoplasm. The enzyme catalyses a (3R)-hydroxyacyl-[ACP] = a (2E)-enoyl-[ACP] + H2O. In terms of biological role, involved in unsaturated fatty acids biosynthesis. Catalyzes the dehydration of short chain beta-hydroxyacyl-ACPs and long chain saturated and unsaturated beta-hydroxyacyl-ACPs. This is 3-hydroxyacyl-[acyl-carrier-protein] dehydratase FabZ from Clostridium botulinum (strain Okra / Type B1).